A 294-amino-acid chain; its full sequence is Cuticle collagen 144 (294 aa).

The first 30 residues, 1-30 (MEKILVTISTGAASFAVLAVLFTIPSLYNT), serve as a signal peptide directing secretion. The span at 100–112 (TCPPGPPGPPGQP) shows a compositional bias: pro residues. Disordered regions lie at residues 100–134 (TCPP…TYAP) and 148–278 (PQGP…GNDA). Triple-helical region regions lie at residues 102–127 (PPGP…KGED) and 153–274 (GPEG…PGLP). Low complexity-rich tracts occupy residues 164–209 (AGPD…PGQD) and 219–265 (APGA…DGQP).

Collagen polypeptide chains are complexed within the cuticle by disulfide bonds and other types of covalent cross-links.

Its function is as follows. Nematode cuticles are composed largely of collagen-like proteins. The cuticle functions both as an exoskeleton and as a barrier to protect the worm from its environment. The sequence is that of Cuticle collagen 144 from Caenorhabditis briggsae.